The primary structure comprises 607 residues: Guanine nucleotide-binding protein-like 1 (607 aa).

A compositionally biased stretch (basic residues) spans 1–14; the sequence is MPRKKPFSVKQKKK. The interval 1–81 is disordered; sequence MPRKKPFSVK…GPRGYDPNRY (81 aa). Residues 15–26 show a composition bias toward basic and acidic residues; it reads QLQDKRERKRGL. Phosphoserine occurs at positions 32, 33, and 34. Phosphothreonine occurs at positions 48 and 50. A phosphoserine mark is found at S51 and S68. One can recognise a CP-type G domain in the interval 178 to 418; sequence WRQLWRVLEM…LCDCPGLIFP (241 aa). 225–228 contributes to the GTP binding site; sequence NKVD. Phosphoserine is present on S324. GTP contacts are provided by residues 367–374 and 411–415; these read GFPNVGKS and DCPGL. Residues 544–607 form a disordered region; sequence GRVGPAGDEE…PYALLGEGEC (64 aa). Residues 550–585 show a composition bias toward acidic residues; that stretch reads GDEEEEEEEELSSSCEEEGEEDRDADEEGEGDEDTP. A phosphoserine mark is found at S561, S562, and S563.

Belongs to the TRAFAC class YlqF/YawG GTPase family.

Functionally, possible regulatory or functional link with the histocompatibility cluster. This is Guanine nucleotide-binding protein-like 1 (Gnl1) from Rattus norvegicus (Rat).